The sequence spans 1177 residues: Tyrosine-protein kinase hopscotch (1177 aa).

Positions 1–41 (MALANGGEDRMDDSSSGRTSLADSASLTNSSLRSGTSSQSI) are disordered. Residues 16 to 41 (SGRTSLADSASLTNSSLRSGTSSQSI) show a composition bias toward polar residues. S40 and S321 each carry phosphoserine. Residues 46 to 414 (GTIRVFNFTT…IYIRLSSKWM (369 aa)) enclose the FERM domain. One can recognise an SH2; atypical domain in the interval 433–539 (HCHGPIGGAY…YRIPASKYDK (107 aa)). 2 Protein kinase domains span residues 582–843 (YPDS…AEIL) and 892–1164 (YNME…HPTD). ATP-binding positions include 898–906 (IGRGHYGTV) and K926. D1014 serves as the catalytic Proton acceptor. Phosphotyrosine; by autocatalysis is present on residues Y1047 and Y1048. The tract at residues 1158-1177 (KVTHPTDGHQSPPNQPTDAE) is disordered.

This sequence belongs to the protein kinase superfamily. Tyr protein kinase family. JAK subfamily. As to quaternary structure, forms a complex with Hsp83 and piwi; probably Hop mediates the interaction between piwi and Hsp83.

The protein resides in the endomembrane system. It carries out the reaction L-tyrosyl-[protein] + ATP = O-phospho-L-tyrosyl-[protein] + ADP + H(+). In terms of biological role, tyrosine kinase of the non-receptor type, phosphorylates the marelle protein. Required maternally for the establishment of the normal array of embryonic segments: involved in the control of pair-rule gene transcription in a stripe-specific manner. Together with Hsp83 and piwi, mediates canalization, also known as developmental robustness, likely via epigenetic silencing of existing genetic variants and suppression of transposon-induced new genetic variation. The polypeptide is Tyrosine-protein kinase hopscotch (hop) (Drosophila melanogaster (Fruit fly)).